A 429-amino-acid chain; its full sequence is MSSVVVVGTQWGDEGKGKITDFLSQNAEVVARYQGGNNAGHTIKFDDVTYKLHLIPSGIFFEDKICVLGNGMVIDPKAFVEEVAYLHERNVSTDNLRISNRAHVILPYHLKLDILQEEDKGANKIGTTKKGIGPAYMDKAARVGIRVADLMDKDAFREKLVQNLKEKNRLFEKVYEADPIQVEEILDEYYAYGQKMAPYVTDTSVVLNDAIDEGKRVLFEGAQGVMLDIDQGTYPFVTSSNPIAGGVTIGSGVGPTKINHVVGVSKAYTTRVGDGPFPTELHDEIGNQIREVGREYGTTTGRARRVGWFDSVVVRHARRVSGITDLSLNSIDVLTGIETLKICVAYRYKGEIMKEFPASLKVLAECEPVYEEMPGWQEDITGAKSLDDLPENARHYLERVSQLTEIPLSIFSVGPDRSQTNVVRSVYRP.

GTP is bound by residues 12-18 (GDEGKGK) and 40-42 (GHT). The Proton acceptor role is filled by Asp13. Asp13 and Gly40 together coordinate Mg(2+). IMP is bound by residues 13 to 16 (DEGK), 38 to 41 (NAGH), Thr128, Arg142, Gln223, Thr238, and Arg302. Residue His41 is the Proton donor of the active site. 298-304 (TTTGRAR) serves as a coordination point for substrate. GTP is bound by residues Arg304, 330–332 (SID), and 412–414 (SVG).

The protein belongs to the adenylosuccinate synthetase family. Homodimer. Requires Mg(2+) as cofactor.

The protein resides in the cytoplasm. The catalysed reaction is IMP + L-aspartate + GTP = N(6)-(1,2-dicarboxyethyl)-AMP + GDP + phosphate + 2 H(+). It functions in the pathway purine metabolism; AMP biosynthesis via de novo pathway; AMP from IMP: step 1/2. Its function is as follows. Plays an important role in the de novo pathway of purine nucleotide biosynthesis. Catalyzes the first committed step in the biosynthesis of AMP from IMP. This Oceanobacillus iheyensis (strain DSM 14371 / CIP 107618 / JCM 11309 / KCTC 3954 / HTE831) protein is Adenylosuccinate synthetase.